The chain runs to 215 residues: Cytokinin riboside 5'-monophosphate phosphoribohydrolase LOG3 (215 aa).

Residues glutamate 84, 102 to 103, 119 to 125, and threonine 131 contribute to the substrate site; these read RK and GYGTLEE.

The protein belongs to the LOG family. As to expression, expressed in roots and shoots. Detected in root procambium, lateral root primordia, vascular tissues of immature leaves, axillary buds, style and ovular funiculus.

Its subcellular location is the cytoplasm. It is found in the nucleus. It carries out the reaction N(6)-(dimethylallyl)adenosine 5'-phosphate + H2O = N(6)-dimethylallyladenine + D-ribose 5-phosphate. The enzyme catalyses 9-ribosyl-trans-zeatin 5'-phosphate + H2O = trans-zeatin + D-ribose 5-phosphate. In terms of biological role, cytokinin-activating enzyme working in the direct activation pathway. Phosphoribohydrolase that converts inactive cytokinin nucleotides to the biologically active free-base forms. This Arabidopsis thaliana (Mouse-ear cress) protein is Cytokinin riboside 5'-monophosphate phosphoribohydrolase LOG3 (LOG3).